The following is a 243-amino-acid chain: Phosphoribosyl isomerase A (243 aa).

The Proton acceptor role is filled by Asp-9. The active-site Proton donor is the Asp-128.

The protein belongs to the HisA/HisF family.

Its subcellular location is the cytoplasm. The catalysed reaction is 1-(5-phospho-beta-D-ribosyl)-5-[(5-phospho-beta-D-ribosylamino)methylideneamino]imidazole-4-carboxamide = 5-[(5-phospho-1-deoxy-D-ribulos-1-ylimino)methylamino]-1-(5-phospho-beta-D-ribosyl)imidazole-4-carboxamide. It carries out the reaction N-(5-phospho-beta-D-ribosyl)anthranilate = 1-(2-carboxyphenylamino)-1-deoxy-D-ribulose 5-phosphate. It functions in the pathway amino-acid biosynthesis; L-histidine biosynthesis; L-histidine from 5-phospho-alpha-D-ribose 1-diphosphate: step 4/9. The protein operates within amino-acid biosynthesis; L-tryptophan biosynthesis; L-tryptophan from chorismate: step 3/5. Functionally, involved in both the histidine and tryptophan biosynthetic pathways. This is Phosphoribosyl isomerase A from Mycobacterium avium (strain 104).